A 498-amino-acid polypeptide reads, in one-letter code: MTKYVGAIDQGTTSTRFIVFDRKGQIFSVAQREHEQIYPRPGWVEHNAVEIWLNTRTVILEALEKKGLSTSDLAAVGVTNQRETALLWDRKTGEPLYNALVWQDTRTDQLVARYAKEGGQDRLRAKTGLPLATYFSGLKLHWILDNVPGARAKAEAGDALFGNIDTWLLWNLTGGPDGGIHITDVTNASRTQLMDLEKLAWDEDILKLFNIPAACLPRIVSSSERYGTGKGPLEGVTLSGILGDQQAALFGQACLHPGEAKNTYGTGNFMLMNTGEKPFPSTCGLITTVGYKLGDAKAVYALEGSIAITGALVQWLRDNLGIIKNSADIEPLARTVSDNGDVYFVPAFSGLYAPRWDDSARGVVCGLTRFANKGHIARAALEATAYQTREVLEAMVKDSKVAIRELRTDGGMVVNELLMQFQADMVNVPVVRPKVIETTALGAAYAAGLAVGYWASTDDITQNWGVDRRWHPHMAAEQREHLYGSWNKAVERSLGWAR.

Position 12 (Thr12) interacts with ADP. ATP contacts are provided by Thr12, Thr13, and Ser14. Thr12 serves as a coordination point for sn-glycerol 3-phosphate. Arg16 provides a ligand contact to ADP. Sn-glycerol 3-phosphate contacts are provided by Arg82, Glu83, Tyr134, and Asp244. Glycerol is bound by residues Arg82, Glu83, Tyr134, Asp244, and Gln245. 2 residues coordinate ADP: Thr266 and Gly310. ATP contacts are provided by Thr266, Gly310, Gln314, and Gly411. Positions 411 and 415 each coordinate ADP.

It belongs to the FGGY kinase family.

It catalyses the reaction glycerol + ATP = sn-glycerol 3-phosphate + ADP + H(+). Its pathway is polyol metabolism; glycerol degradation via glycerol kinase pathway; sn-glycerol 3-phosphate from glycerol: step 1/1. Inhibited by fructose 1,6-bisphosphate (FBP). In terms of biological role, key enzyme in the regulation of glycerol uptake and metabolism. Catalyzes the phosphorylation of glycerol to yield sn-glycerol 3-phosphate. This chain is Glycerol kinase, found in Azorhizobium caulinodans (strain ATCC 43989 / DSM 5975 / JCM 20966 / LMG 6465 / NBRC 14845 / NCIMB 13405 / ORS 571).